Here is a 499-residue protein sequence, read N- to C-terminus: Taxadiene 5-alpha hydroxylase (499 aa).

Residues 22 to 42 traverse the membrane as a helical; Signal-anchor segment; it reads TESFSIALSAIAGILLLLLLF. Residue Cys445 coordinates heme.

This sequence belongs to the cytochrome P450 family. Heme is required as a cofactor.

It is found in the membrane. It catalyses the reaction taxa-4(5),11(12)-diene + reduced [NADPH--hemoprotein reductase] + O2 = taxa-4(20),11-dien-5alpha-ol + oxidized [NADPH--hemoprotein reductase] + H2O + H(+). Its pathway is alkaloid biosynthesis; taxol biosynthesis; taxa-4(20),11-dien-5alpha-ol from geranylgeranyl diphosphate: step 2/2. Its function is as follows. Catalyzes the first oxygenation step of taxol biosynthesis. Can use both taxa-4(5),11(12)-diene and taxa-4(20),11(12)-diene as substrate. The sequence is that of Taxadiene 5-alpha hydroxylase from Taxus cuspidata (Japanese yew).